A 137-amino-acid polypeptide reads, in one-letter code: Small heat shock protein IbpA (137 aa).

Positions 28-137 (SQSNGGYPPY…ANKPRRIEIN (110 aa)) constitute a sHSP domain.

Belongs to the small heat shock protein (HSP20) family. As to quaternary structure, monomer. Forms homomultimers of about 100-150 subunits at optimal growth temperatures. Conformation changes to monomers at high temperatures or high ionic concentrations.

Its subcellular location is the cytoplasm. In terms of biological role, associates with aggregated proteins, together with IbpB, to stabilize and protect them from irreversible denaturation and extensive proteolysis during heat shock and oxidative stress. Aggregated proteins bound to the IbpAB complex are more efficiently refolded and reactivated by the ATP-dependent chaperone systems ClpB and DnaK/DnaJ/GrpE. Its activity is ATP-independent. The sequence is that of Small heat shock protein IbpA from Citrobacter koseri (strain ATCC BAA-895 / CDC 4225-83 / SGSC4696).